The following is a 66-amino-acid chain: MWKVDDQGFLIISVTGTKFNLIATSSKIGFYTDPPSQLFLMPLNFFPPPKFSKNEPHKKQKRFIYF.

The protein belongs to the asfivirus I177L family.

The protein localises to the virion. This is Protein I177L from African swine fever virus (isolate Tick/Malawi/Lil 20-1/1983) (ASFV).